The chain runs to 562 residues: uncharacterized protein (562 aa).

A run of 5 helical transmembrane segments spans residues 4 to 26 (VRWIISTAPEIFLLLAVAIGTML), 33 to 55 (GFAIGTTACILIVSVLIGQLGTF), 59 to 78 (ALLRIVLFSLFVFTIGYKSG), 90 to 112 (LAQVAMALVLGGTGLVIVLAFAF), and 159 to 181 (IAAGYAVTYVLGYILTLLYVPFA). RCK C-terminal domains follow at residues 207–287 (PKTE…IIGT) and 295–375 (LKAI…QVGQ). 6 consecutive transmembrane segments (helical) span residues 385–402 (IAFLAAGIAAGLLAGLVS), 406–428 (GGIALTLGGGGGALIAGLLCGWL), 449–471 (LGLGGFIAAIGLANGHAAWVAIQ), 476–498 (LLVGMGLVVTLVPLVVATLFAYH), 505–524 (VITCGALAGAMTVDAAVTGA), and 539–561 (VPYAVGNVVLTVLGPIIVACTFV).

It belongs to the AAE transporter (TC 2.A.81) family.

The protein resides in the cell membrane. This is an uncharacterized protein from Bradyrhizobium diazoefficiens (strain JCM 10833 / BCRC 13528 / IAM 13628 / NBRC 14792 / USDA 110).